Here is a 128-residue protein sequence, read N- to C-terminus: Large ribosomal subunit protein bL17 (128 aa).

Belongs to the bacterial ribosomal protein bL17 family. In terms of assembly, part of the 50S ribosomal subunit. Contacts protein L32.

In Proteus mirabilis (strain HI4320), this protein is Large ribosomal subunit protein bL17.